Here is an 88-residue protein sequence, read N- to C-terminus: DNA-directed RNA polymerase subunit omega (88 aa).

Belongs to the RNA polymerase subunit omega family. The RNAP catalytic core consists of 2 alpha, 1 beta, 1 beta' and 1 omega subunit. When a sigma factor is associated with the core the holoenzyme is formed, which can initiate transcription.

The enzyme catalyses RNA(n) + a ribonucleoside 5'-triphosphate = RNA(n+1) + diphosphate. In terms of biological role, promotes RNA polymerase assembly. Latches the N- and C-terminal regions of the beta' subunit thereby facilitating its interaction with the beta and alpha subunits. The polypeptide is DNA-directed RNA polymerase subunit omega (Haemophilus influenzae (strain PittEE)).